We begin with the raw amino-acid sequence, 102 residues long: Large ribosomal subunit protein bL21 (102 aa).

It belongs to the bacterial ribosomal protein bL21 family. In terms of assembly, part of the 50S ribosomal subunit. Contacts protein L20.

In terms of biological role, this protein binds to 23S rRNA in the presence of protein L20. The chain is Large ribosomal subunit protein bL21 from Nitratidesulfovibrio vulgaris (strain ATCC 29579 / DSM 644 / CCUG 34227 / NCIMB 8303 / VKM B-1760 / Hildenborough) (Desulfovibrio vulgaris).